Consider the following 98-residue polypeptide: NADH-ubiquinone oxidoreductase chain 4L (98 aa).

A run of 3 helical transmembrane segments spans residues 1-21 (MSLTYFNVMLAFTMSFLGLLM), 30-50 (LLCLEGLMLSLFVLVTITILI), and 61-81 (IILLVFAACEAALGLSLLVAV).

The protein belongs to the complex I subunit 4L family. As to quaternary structure, core subunit of respiratory chain NADH dehydrogenase (Complex I) which is composed of 45 different subunits.

It is found in the mitochondrion inner membrane. The enzyme catalyses a ubiquinone + NADH + 5 H(+)(in) = a ubiquinol + NAD(+) + 4 H(+)(out). Functionally, core subunit of the mitochondrial membrane respiratory chain NADH dehydrogenase (Complex I) which catalyzes electron transfer from NADH through the respiratory chain, using ubiquinone as an electron acceptor. Part of the enzyme membrane arm which is embedded in the lipid bilayer and involved in proton translocation. The polypeptide is NADH-ubiquinone oxidoreductase chain 4L (MT-ND4L) (Pipistrellus abramus (Japanese pipistrelle)).